Consider the following 244-residue polypeptide: MSDRLAELERAIGITFRDRTLLQTAFMHRSLFNEQPHLLNHLTDNERLEFLGDSVLHFVTTTWLFETFPDQDEATLTNWRAALVSTKGLAECAAQFNLGQYAYLSRGEDNPGGRSRQKLLADLFEALVGAIYLDQGLETARAFIVPFWQARIEQIIHIDLDPTTRLQELMQARFKQLPDYSIEEERGPEHQREYVMAVTVAGRKFTGSGSSKKEAKRAAARKALAAWDKHGFTATAIDAQDERN.

Residues 5–136 (LAELERAIGI…LVGAIYLDQG (132 aa)) enclose the RNase III domain. Glutamate 49 serves as a coordination point for Mg(2+). Aspartate 53 is a catalytic residue. Mg(2+) is bound by residues aspartate 122 and glutamate 125. The active site involves glutamate 125. The DRBM domain maps to 161–229 (DPTTRLQELM…ARKALAAWDK (69 aa)).

This sequence belongs to the ribonuclease III family. In terms of assembly, homodimer. Mg(2+) serves as cofactor.

It is found in the cytoplasm. It carries out the reaction Endonucleolytic cleavage to 5'-phosphomonoester.. Digests double-stranded RNA. Involved in the processing of primary rRNA transcript to yield the immediate precursors to the large and small rRNAs (23S and 16S). Processes some mRNAs, and tRNAs when they are encoded in the rRNA operon. Processes pre-crRNA and tracrRNA of type II CRISPR loci if present in the organism. In Chloroflexus aurantiacus (strain ATCC 29364 / DSM 637 / Y-400-fl), this protein is Ribonuclease 3.